The sequence spans 163 residues: UPF0587 protein CG4646 (163 aa).

Residues Cys-33, Cys-36, Cys-68, and Cys-71 each contribute to the Zn(2+) site.

It belongs to the UPF0587 family.

The sequence is that of UPF0587 protein CG4646 from Drosophila melanogaster (Fruit fly).